A 465-amino-acid chain; its full sequence is Iron-sulfur cluster assembly SufBD family protein SERP0500 (465 aa).

Belongs to the iron-sulfur cluster assembly SufBD family.

This Staphylococcus epidermidis (strain ATCC 35984 / DSM 28319 / BCRC 17069 / CCUG 31568 / BM 3577 / RP62A) protein is Iron-sulfur cluster assembly SufBD family protein SERP0500.